A 148-amino-acid polypeptide reads, in one-letter code: Large ribosomal subunit protein uL13 (148 aa).

This sequence belongs to the universal ribosomal protein uL13 family. As to quaternary structure, part of the 50S ribosomal subunit.

This protein is one of the early assembly proteins of the 50S ribosomal subunit, although it is not seen to bind rRNA by itself. It is important during the early stages of 50S assembly. The chain is Large ribosomal subunit protein uL13 from Ureaplasma parvum serovar 3 (strain ATCC 27815 / 27 / NCTC 11736).